Here is a 229-residue protein sequence, read N- to C-terminus: Large ribosomal subunit protein uL1 (229 aa).

It belongs to the universal ribosomal protein uL1 family. As to quaternary structure, part of the 50S ribosomal subunit.

Its function is as follows. Binds directly to 23S rRNA. The L1 stalk is quite mobile in the ribosome, and is involved in E site tRNA release. In terms of biological role, protein L1 is also a translational repressor protein, it controls the translation of the L11 operon by binding to its mRNA. In Clostridium acetobutylicum (strain ATCC 824 / DSM 792 / JCM 1419 / IAM 19013 / LMG 5710 / NBRC 13948 / NRRL B-527 / VKM B-1787 / 2291 / W), this protein is Large ribosomal subunit protein uL1.